Consider the following 597-residue polypeptide: Elongation factor 4 (597 aa).

In terms of domain architecture, tr-type G spans 2–184; the sequence is KHIRNFSIIA…NIVSAIPAPE (183 aa). GTP-binding positions include 14–19 and 131–134; these read DHGKST and NKID.

The protein belongs to the TRAFAC class translation factor GTPase superfamily. Classic translation factor GTPase family. LepA subfamily.

The protein resides in the cell inner membrane. The catalysed reaction is GTP + H2O = GDP + phosphate + H(+). Its function is as follows. Required for accurate and efficient protein synthesis under certain stress conditions. May act as a fidelity factor of the translation reaction, by catalyzing a one-codon backward translocation of tRNAs on improperly translocated ribosomes. Back-translocation proceeds from a post-translocation (POST) complex to a pre-translocation (PRE) complex, thus giving elongation factor G a second chance to translocate the tRNAs correctly. Binds to ribosomes in a GTP-dependent manner. This Vibrio campbellii (strain ATCC BAA-1116) protein is Elongation factor 4.